Reading from the N-terminus, the 240-residue chain is Uridylate kinase (240 aa).

13–16 (KFSG) is an ATP binding site. Position 55 (Gly-55) interacts with UMP. 2 residues coordinate ATP: Gly-56 and Arg-60. Residues Asp-76 and 137–144 (TGNPFFTT) each bind UMP. ATP is bound by residues Thr-164, Tyr-170, and Asp-173.

The protein belongs to the UMP kinase family. In terms of assembly, homohexamer.

The protein resides in the cytoplasm. The catalysed reaction is UMP + ATP = UDP + ADP. Its pathway is pyrimidine metabolism; CTP biosynthesis via de novo pathway; UDP from UMP (UMPK route): step 1/1. Its activity is regulated as follows. Inhibited by UTP. Catalyzes the reversible phosphorylation of UMP to UDP. This is Uridylate kinase from Helicobacter acinonychis (strain Sheeba).